We begin with the raw amino-acid sequence, 280 residues long: Acyl-[acyl-carrier-protein]--UDP-N-acetylglucosamine O-acyltransferase (280 aa).

The protein belongs to the transferase hexapeptide repeat family. LpxA subfamily. In terms of assembly, homotrimer.

It is found in the cytoplasm. The catalysed reaction is a (3R)-hydroxyacyl-[ACP] + UDP-N-acetyl-alpha-D-glucosamine = a UDP-3-O-[(3R)-3-hydroxyacyl]-N-acetyl-alpha-D-glucosamine + holo-[ACP]. It functions in the pathway glycolipid biosynthesis; lipid IV(A) biosynthesis; lipid IV(A) from (3R)-3-hydroxytetradecanoyl-[acyl-carrier-protein] and UDP-N-acetyl-alpha-D-glucosamine: step 1/6. Functionally, involved in the biosynthesis of lipid A, a phosphorylated glycolipid that anchors the lipopolysaccharide to the outer membrane of the cell. This is Acyl-[acyl-carrier-protein]--UDP-N-acetylglucosamine O-acyltransferase from Chlamydia trachomatis serovar A (strain ATCC VR-571B / DSM 19440 / HAR-13).